The primary structure comprises 559 residues: Potassium-transporting ATPase potassium-binding subunit (559 aa).

13 helical membrane-spanning segments follow: residues 5-25 (GFLL…PLGS), 27-47 (LARL…RILW), 63-83 (LLAL…LLFW), 132-152 (GLTV…FALI), 170-190 (LVRI…LFFI), 253-273 (LAQM…FGEA), 283-303 (LLWA…WAEV), 327-347 (FGVL…CGAV), 356-376 (ALGG…FGGV), 379-399 (GLYG…LMIG), 416-436 (MTAL…ALAM), 484-504 (LLAF…MAIA), and 524-544 (GALF…LTFI).

Belongs to the KdpA family. As to quaternary structure, the system is composed of three essential subunits: KdpA, KdpB and KdpC.

The protein localises to the cell inner membrane. Functionally, part of the high-affinity ATP-driven potassium transport (or Kdp) system, which catalyzes the hydrolysis of ATP coupled with the electrogenic transport of potassium into the cytoplasm. This subunit binds the periplasmic potassium ions and delivers the ions to the membrane domain of KdpB through an intramembrane tunnel. The chain is Potassium-transporting ATPase potassium-binding subunit from Salmonella enteritidis PT4 (strain P125109).